A 180-amino-acid chain; its full sequence is MSIEVSNESGMDVSEEELISVARFVIARMDVHPAAELSMVLVDSATMADLHMRWMDLPGPTDVMSFPMDELEPGGRPDSPEPGPSMLGDIVLCPSFASDQADKAGHPLAHELALLTVHGVLHLLGYDHAEPEEEKEMFGLQNQLLEDWYEDLRRAERDAALAARDQKLLGKAGFFDSPDQ.

Residues histidine 118, histidine 122, and histidine 128 each contribute to the Zn(2+) site.

Belongs to the endoribonuclease YbeY family. Zn(2+) serves as cofactor.

Its subcellular location is the cytoplasm. Single strand-specific metallo-endoribonuclease involved in late-stage 70S ribosome quality control and in maturation of the 3' terminus of the 16S rRNA. This chain is Endoribonuclease YbeY, found in Rhodococcus jostii (strain RHA1).